Consider the following 254-residue polypeptide: Cell division protein DivIB (254 aa).

Residues 1–21 are Cytoplasmic-facing; that stretch reads MPNAQIPVLKKNRTKKRTSRK. A helical membrane pass occupies residues 22–42; it reads IAILLILLFIVLLAVLFFRSS. The Extracellular portion of the chain corresponds to 43 to 254; sequence LSRVSEIRFD…EEGQEKDTTQ (212 aa). Positions 44–112 constitute a POTRA domain; sequence SRVSEIRFDG…GIIAIHIKEF (69 aa).

This sequence belongs to the FtsQ/DivIB family. DivIB subfamily.

The protein resides in the cell membrane. In terms of biological role, cell division protein that may be involved in stabilizing or promoting the assembly of the division complex. This is Cell division protein DivIB from Paenibacillus polymyxa (strain E681).